The chain runs to 497 residues: Envelope glycoprotein E (497 aa).

Over 1–398 the chain is Virion surface; it reads MCVFQILIIV…GTIIYDILLT (398 aa). N-linked (GlcNAc...) asparagine; by host glycans are attached at residues asparagine 60, asparagine 133, asparagine 148, asparagine 203, asparagine 277, asparagine 366, and asparagine 388. A helical transmembrane segment spans residues 399 to 419; the sequence is SLSIGAIIIVIVGGVCIAILI. At 420 to 497 the chain is on the intravirion side; sequence RRRRRRRTRG…KIRKRLDLYH (78 aa).

This sequence belongs to the alphaherpesvirinae glycoprotein E family. As to quaternary structure, interacts with gI. In terms of processing, phosphorylated within the acidic cluster. Phosphorylation determines whether endocytosed viral gE traffics to the trans-Golgi network or recycles to the cell membrane.

The protein localises to the virion membrane. It is found in the host cell membrane. The protein resides in the host cell junction. Its subcellular location is the host Golgi apparatus membrane. It localises to the host endosome membrane. Its function is as follows. In epithelial cells, the heterodimer gE/gI is required for the cell-to-cell spread of the virus, by sorting nascent virions to cell junctions. Once the virus reaches the cell junctions, virus particles can spread to adjacent cells extremely rapidly through interactions with cellular receptors that accumulate at these junctions. Implicated in basolateral spread in polarized cells. In neuronal cells, gE/gI is essential for the anterograde spread of the infection throughout the host nervous system. Together with US9, the heterodimer gE/gI is involved in the sorting and transport of viral structural components toward axon tips. The protein is Envelope glycoprotein E (MDV096) of Gallus gallus (Chicken).